A 164-amino-acid polypeptide reads, in one-letter code: Glycine cleavage system H protein, mitochondrial (164 aa).

The transit peptide at 1-34 (MALRLWASSAANALKISCSGATRAAPAYSISRYF) directs the protein to the mitochondrion. The region spanning 56–138 (VATIGITDHA…YEDGWMIKVK (83 aa)) is the Lipoyl-binding domain. N6-lipoyllysine is present on Lys-97.

Belongs to the GcvH family. The glycine cleavage system is composed of four proteins: P, T, L and H. (R)-lipoate serves as cofactor.

It is found in the mitochondrion. Functionally, the glycine cleavage system catalyzes the degradation of glycine. The H protein shuttles the methylamine group of glycine from the P protein to the T protein. The chain is Glycine cleavage system H protein, mitochondrial (GDCSH) from Oryza sativa subsp. indica (Rice).